The following is a 168-amino-acid chain: Diphosphoinositol polyphosphate phosphohydrolase 1 (168 aa).

Met-1 carries the N-acetylmethionine modification. Substrate-binding positions include Arg-10, 18–20 (KKR), and 39–41 (SSR). The 126-residue stretch at 17-142 (YKKRAACLCF…KPVQASYFEA (126 aa)) folds into the Nudix hydrolase domain. Gly-50 and Glu-66 together coordinate Mg(2+). A Nudix box motif is present at residues 51 to 72 (GGMEPEEEPSVAAVREVCEEAG). The active-site Proton acceptor is Glu-69. Glu-70 contacts Mg(2+). Residues 89–91 (RKH), Arg-115, and Lys-133 each bind substrate.

This sequence belongs to the Nudix hydrolase family. DIPP subfamily. In terms of assembly, monomer. The cofactor is Mg(2+). It depends on Mn(2+) as a cofactor. Requires Zn(2+) as cofactor.

The protein resides in the cytoplasm. The protein localises to the nucleus. It carries out the reaction diphospho-myo-inositol polyphosphate + H2O = myo-inositol polyphosphate + phosphate.. It catalyses the reaction 5-diphospho-1D-myo-inositol 1,2,3,4,6-pentakisphosphate + H2O = 1D-myo-inositol hexakisphosphate + phosphate + H(+). The catalysed reaction is 3,5-bis(diphospho)-1D-myo-inositol 1,2,4,6-tetrakisphosphate + H2O = 3-diphospho-1D-myo-inositol 1,2,4,5,6-pentakisphosphate + phosphate + 2 H(+). The enzyme catalyses [phosphate](n+1) + n H2O = (n+1) phosphate + n H(+). It carries out the reaction P(1),P(5)-bis(5'-adenosyl) pentaphosphate + H2O = ADP + ATP + 2 H(+). It catalyses the reaction P(1),P(6)-bis(5'-adenosyl) hexaphosphate + H2O = 2 ATP + 2 H(+). The catalysed reaction is P(1),P(4)-bis(5'-adenosyl) tetraphosphate + H2O = AMP + ATP + 2 H(+). The enzyme catalyses a 5'-end (N(7)-methyl 5'-triphosphoguanosine)-ribonucleoside in mRNA + H2O = N(7)-methyl-GMP + a 5'-end diphospho-ribonucleoside in mRNA + 2 H(+). It carries out the reaction a 5'-end (N(7)-methyl 5'-triphosphoguanosine)-ribonucleoside in mRNA + H2O = N(7)-methyl-GDP + a 5'-end phospho-ribonucleoside in mRNA + 2 H(+). Diphosphoinositol polyphosphate phosphohydrolase is inhibited by fluoride and InsP6. Its function is as follows. Cleaves a beta-phosphate from the diphosphate groups in PP-InsP5 (diphosphoinositol pentakisphosphate) and [PP]2-InsP4 (bisdiphosphoinositol tetrakisphosphate), suggesting that it may play a role in signal transduction. InsP6 (inositol hexakisphosphate) is not a substrate. Acts as a negative regulator of the ERK1/2 pathway. Also able to catalyze the hydrolysis of dinucleoside oligophosphates, with diadenosine 5',5'''-P1,P6-hexaphosphate (Ap6A) and diadenosine 5',5'''- P1,P5-pentaphosphate (Ap5A) being the preferred substrates. The major reaction products are ADP and p4a from Ap6A and ADP and ATP from Ap5A. Also able to hydrolyze 5- phosphoribose 1-diphosphate. Acts as a decapping enzyme that can hydrolyze both monomethylated and unmethylated capped RNAs. Hydrolyzes monomethylated capped RNA after both the alpha- and beta-phosphates generating m7GMP + ppRNA and m7GDP + pRNA. Modulates the stability of a subset of mRNAs implicated in cell motility. Divalent cations zinc, magnesium and manganese determine its substrate specificity. Exhibits endopolyphosphatase activity in the presence of zinc ions. Exhibits diphosphoinositol polyphosphate phosphohydrolase in the presence of magnesium ions and diadenosine hexaphosphate hydrolase activity in the presence of manganese ions. Plays an important role in limiting DNA damage and maintaining cell survival upon oxidative stress via its endopolyphosphatase activity. In Rattus norvegicus (Rat), this protein is Diphosphoinositol polyphosphate phosphohydrolase 1.